A 153-amino-acid chain; its full sequence is Regulator of ribonuclease activity B (153 aa).

Positions 114 to 153 (DPNADDDEYGDDGEFLDDEDEYGDDGEFFDDEDEEEPRVH) are disordered. The span at 115–153 (PNADDDEYGDDGEFLDDEDEYGDDGEFFDDEDEEEPRVH) shows a compositional bias: acidic residues.

This sequence belongs to the RraB family. In terms of assembly, interacts with the C-terminal region of Rne.

It is found in the cytoplasm. Globally modulates RNA abundance by binding to RNase E (Rne) and regulating its endonucleolytic activity. Can modulate Rne action in a substrate-dependent manner by altering the composition of the degradosome. This Haemophilus influenzae (strain ATCC 51907 / DSM 11121 / KW20 / Rd) protein is Regulator of ribonuclease activity B.